We begin with the raw amino-acid sequence, 194 residues long: Lectin-C (194 aa).

Residues 1-26 (MKRSNSIAVMLVLVLSSLMLLLPVEG) form the signal peptide. Residues 27–44 (QGHEGHGVGEILLMGKLG) constitute a propeptide, removed in mature form. 3 consecutive Chitin-binding type-1 domains span residues 45–86 (APVC…QCDY), 87–127 (NRCG…QCSY), and 128–168 (WRCG…QCDL). 12 cysteine pairs are disulfide-bonded: cysteine 48/cysteine 63, cysteine 57/cysteine 69, cysteine 62/cysteine 76, cysteine 80/cysteine 84, cysteine 89/cysteine 104, cysteine 98/cysteine 110, cysteine 103/cysteine 117, cysteine 121/cysteine 125, cysteine 130/cysteine 145, cysteine 139/cysteine 151, cysteine 144/cysteine 158, and cysteine 162/cysteine 166. Positions 171 to 194 (LLPSPLRRIIAIRKLKANLANMLS) are cleaved as a propeptide — removed in mature form.

In terms of assembly, homodimer. The homodimers are asymmetric; formed in a 'head-to-tail' fashion via hydrophobic interactions between aromatic residues of the carbohydrate-binding sites of each subunit.

Functionally, N-acetyl-D-glucosamine binding lectin. Almost no hemagglutinating activity towards human erythrocytes. Low mitogenic activity towards human peripheral blood lymphocytes. In Phytolacca americana (American pokeweed), this protein is Lectin-C.